Here is a 162-residue protein sequence, read N- to C-terminus: Phenazine biosynthesis protein PhzB 2 (162 aa).

T91 carries the phosphothreonine modification.

It belongs to the PhzA/PhzB family.

In terms of biological role, involved in the biosynthesis of the antibiotic phenazine, a nitrogen-containing heterocyclic molecule having important roles in virulence, competition and biological control. This is Phenazine biosynthesis protein PhzB 2 (phzB2) from Pseudomonas aeruginosa (strain UCBPP-PA14).